A 431-amino-acid chain; its full sequence is Histidine--tRNA ligase (431 aa).

It belongs to the class-II aminoacyl-tRNA synthetase family. As to quaternary structure, homodimer.

It is found in the cytoplasm. It carries out the reaction tRNA(His) + L-histidine + ATP = L-histidyl-tRNA(His) + AMP + diphosphate + H(+). In Limosilactobacillus fermentum (strain NBRC 3956 / LMG 18251) (Lactobacillus fermentum), this protein is Histidine--tRNA ligase.